The following is a 241-amino-acid chain: Protein TraL (241 aa).

It to plasmid IncP-alpha RP4 TraL.

This chain is Protein TraL (traL), found in Escherichia coli.